The sequence spans 189 residues: 3-hydroxyanthranilate 3,4-dioxygenase (189 aa).

Arg-50 contributes to the O2 binding site. Residues His-54, Glu-60, and His-102 each contribute to the Fe cation site. Glu-60 provides a ligand contact to substrate. 2 residues coordinate substrate: Arg-106 and Glu-116. 4 residues coordinate a divalent metal cation: Cys-131, Cys-136, Cys-170, and Cys-173.

Belongs to the 3-HAO family. The cofactor is Fe(2+).

It localises to the cytoplasm. The enzyme catalyses 3-hydroxyanthranilate + O2 = (2Z,4Z)-2-amino-3-carboxymuconate 6-semialdehyde. Its pathway is cofactor biosynthesis; NAD(+) biosynthesis; quinolinate from L-kynurenine: step 3/3. In terms of biological role, catalyzes the oxidative ring opening of 3-hydroxyanthranilate to 2-amino-3-carboxymuconate semialdehyde, which spontaneously cyclizes to quinolinate. The polypeptide is 3-hydroxyanthranilate 3,4-dioxygenase (bna1) (Aspergillus niger (strain ATCC MYA-4892 / CBS 513.88 / FGSC A1513)).